A 429-amino-acid chain; its full sequence is UDP-glucuronate 4-epimerase 1 (429 aa).

Transmembrane regions (helical) follow at residues F36 to V56 and G87 to L107. S89 to F120 is a binding site for NAD(+). Catalysis depends on Y239, which acts as the Proton acceptor.

It belongs to the NAD(P)-dependent epimerase/dehydratase family. As to quaternary structure, homodimer. In terms of tissue distribution, in root stele, leaves, siliques, flowers, pollen and stems.

It is found in the golgi apparatus. It localises to the golgi stack membrane. The catalysed reaction is UDP-alpha-D-glucuronate = UDP-alpha-D-galacturonate. Inhibited by UDP-Xylose. In terms of biological role, UDP-D-glucuronate 4-epimerase involved in the synthesis of the negatively charged monosaccharide that forms the backbone of pectic cell wall components. This chain is UDP-glucuronate 4-epimerase 1 (GAE1), found in Arabidopsis thaliana (Mouse-ear cress).